Here is a 255-residue protein sequence, read N- to C-terminus: Borealin-2 (255 aa).

2 disordered regions span residues 1 to 24 (MAPR…HSFE) and 107 to 156 (IQKP…STGS). The segment covering 124–135 (AGQQRSSSQSKT) has biased composition (polar residues).

This sequence belongs to the borealin family. As to quaternary structure, component of the CPC complex.

It localises to the nucleus. It is found in the chromosome. The protein resides in the centromere. Its function is as follows. Component of the chromosomal passenger complex (CPC), a complex that acts as a key regulator of mitosis. The CPC complex has essential functions at the centromere in ensuring correct chromosome alignment and segregation and is required for chromatin-induced microtubule stabilization and spindle assembly. This Danio rerio (Zebrafish) protein is Borealin-2 (cdca9).